We begin with the raw amino-acid sequence, 238 residues long: MLPKSSLKETQQALANAIRLGNADPLNGYAASRLAVYTRLVRNNAFGFIDRCFVEAPLHIEPEYWKNAKENFVQNGNAHSPYFQDIAGEFLLFCQEKEIFDTNILALMDFENTQLLAEVSLAKVPEKFEWNRHSVMQLSGAAYLKSYDVDFLSSDFKQFDDTPIQAIIWRDSDFRIQQQILSELDYWLLSYLQEQPNSLENVLSALNTMVEDSTSIIPLLEQVWMKWVTSEVIYPEQR.

This is an uncharacterized protein from Haemophilus influenzae (strain ATCC 51907 / DSM 11121 / KW20 / Rd).